We begin with the raw amino-acid sequence, 153 residues long: SsrA-binding protein (153 aa).

Basic and acidic residues predominate over residues 132-142 (ALKRKEAEREA). Residues 132–153 (ALKRKEAEREAQSAMKRYAKGY) form a disordered region.

It belongs to the SmpB family.

Its subcellular location is the cytoplasm. Required for rescue of stalled ribosomes mediated by trans-translation. Binds to transfer-messenger RNA (tmRNA), required for stable association of tmRNA with ribosomes. tmRNA and SmpB together mimic tRNA shape, replacing the anticodon stem-loop with SmpB. tmRNA is encoded by the ssrA gene; the 2 termini fold to resemble tRNA(Ala) and it encodes a 'tag peptide', a short internal open reading frame. During trans-translation Ala-aminoacylated tmRNA acts like a tRNA, entering the A-site of stalled ribosomes, displacing the stalled mRNA. The ribosome then switches to translate the ORF on the tmRNA; the nascent peptide is terminated with the 'tag peptide' encoded by the tmRNA and targeted for degradation. The ribosome is freed to recommence translation, which seems to be the essential function of trans-translation. In Campylobacter hominis (strain ATCC BAA-381 / DSM 21671 / CCUG 45161 / LMG 19568 / NCTC 13146 / CH001A), this protein is SsrA-binding protein.